A 251-amino-acid polypeptide reads, in one-letter code: CDP-diacylglycerol pyrophosphatase (251 aa).

The helical transmembrane segment at 4–24 (AGLLFLVMIVIAVVAAGIGYW) threads the bilayer.

This sequence belongs to the Cdh family.

The protein resides in the cell inner membrane. The catalysed reaction is a CDP-1,2-diacyl-sn-glycerol + H2O = a 1,2-diacyl-sn-glycero-3-phosphate + CMP + 2 H(+). It functions in the pathway phospholipid metabolism; CDP-diacylglycerol degradation; phosphatidate from CDP-diacylglycerol: step 1/1. The chain is CDP-diacylglycerol pyrophosphatase from Escherichia coli (strain ATCC 8739 / DSM 1576 / NBRC 3972 / NCIMB 8545 / WDCM 00012 / Crooks).